Reading from the N-terminus, the 227-residue chain is Cytochrome c oxidase subunit 2 (227 aa).

Residues 1–14 (MAYPFQLGFQDATS) lie on the Mitochondrial intermembrane side of the membrane. The helical transmembrane segment at 15–45 (PIMEELLHFHDHTLMIVFLISSLVLYIITLM) threads the bilayer. Residues 46–59 (LTTKLTHTSTMDAQ) lie on the Mitochondrial matrix side of the membrane. Residues 60–87 (EVETVWTILPAIILILIALPSLRILYMM) form a helical membrane-spanning segment. At 88–227 (DEVNNPSLTV…IFEKWSASML (140 aa)) the chain is on the mitochondrial intermembrane side. Cu cation-binding residues include His-161, Cys-196, Glu-198, Cys-200, His-204, and Met-207. Residue Glu-198 coordinates Mg(2+).

Belongs to the cytochrome c oxidase subunit 2 family. Component of the cytochrome c oxidase (complex IV, CIV), a multisubunit enzyme composed of 14 subunits. The complex is composed of a catalytic core of 3 subunits MT-CO1, MT-CO2 and MT-CO3, encoded in the mitochondrial DNA, and 11 supernumerary subunits COX4I, COX5A, COX5B, COX6A, COX6B, COX6C, COX7A, COX7B, COX7C, COX8 and NDUFA4, which are encoded in the nuclear genome. The complex exists as a monomer or a dimer and forms supercomplexes (SCs) in the inner mitochondrial membrane with NADH-ubiquinone oxidoreductase (complex I, CI) and ubiquinol-cytochrome c oxidoreductase (cytochrome b-c1 complex, complex III, CIII), resulting in different assemblies (supercomplex SCI(1)III(2)IV(1) and megacomplex MCI(2)III(2)IV(2)). Found in a complex with TMEM177, COA6, COX18, COX20, SCO1 and SCO2. Interacts with TMEM177 in a COX20-dependent manner. Interacts with COX20. Interacts with COX16. Cu cation is required as a cofactor.

It is found in the mitochondrion inner membrane. The catalysed reaction is 4 Fe(II)-[cytochrome c] + O2 + 8 H(+)(in) = 4 Fe(III)-[cytochrome c] + 2 H2O + 4 H(+)(out). In terms of biological role, component of the cytochrome c oxidase, the last enzyme in the mitochondrial electron transport chain which drives oxidative phosphorylation. The respiratory chain contains 3 multisubunit complexes succinate dehydrogenase (complex II, CII), ubiquinol-cytochrome c oxidoreductase (cytochrome b-c1 complex, complex III, CIII) and cytochrome c oxidase (complex IV, CIV), that cooperate to transfer electrons derived from NADH and succinate to molecular oxygen, creating an electrochemical gradient over the inner membrane that drives transmembrane transport and the ATP synthase. Cytochrome c oxidase is the component of the respiratory chain that catalyzes the reduction of oxygen to water. Electrons originating from reduced cytochrome c in the intermembrane space (IMS) are transferred via the dinuclear copper A center (CU(A)) of subunit 2 and heme A of subunit 1 to the active site in subunit 1, a binuclear center (BNC) formed by heme A3 and copper B (CU(B)). The BNC reduces molecular oxygen to 2 water molecules using 4 electrons from cytochrome c in the IMS and 4 protons from the mitochondrial matrix. This chain is Cytochrome c oxidase subunit 2 (MT-CO2), found in Balaenoptera borealis (Sei whale).